The primary structure comprises 113 residues: Putative pterin-4-alpha-carbinolamine dehydratase (113 aa).

The protein belongs to the pterin-4-alpha-carbinolamine dehydratase family.

The enzyme catalyses (4aS,6R)-4a-hydroxy-L-erythro-5,6,7,8-tetrahydrobiopterin = (6R)-L-erythro-6,7-dihydrobiopterin + H2O. The polypeptide is Putative pterin-4-alpha-carbinolamine dehydratase (Bordetella bronchiseptica (strain ATCC BAA-588 / NCTC 13252 / RB50) (Alcaligenes bronchisepticus)).